The sequence spans 425 residues: Melibiose permease (425 aa).

Residues 1–13 (MNTTTCTHKDNPN) lie on the Cytoplasmic side of the membrane. A helical membrane pass occupies residues 14-34 (FWIFGLFFFLYFFIMATCFPF). Residues 35–50 (LPIWLSDIIGLNKTHT) are Periplasmic-facing. Residues 51–71 (GIVFSCISLSAIAFQPVLGVI) form a helical membrane-spanning segment. Over 72 to 80 (SDKLGLKKH) the chain is Cytoplasmic. Residues 81–101 (LLWIISVLLFLFAPFFLYVFA) traverse the membrane as a helical segment. Over 102–107 (PLLKTN) the chain is Periplasmic. A helical transmembrane segment spans residues 108–128 (IWLGALSGGLYIGFVFSAGSG). Residues 129 to 149 (AIEAYIERVSRNSAFEYGKAR) lie on the Cytoplasmic side of the membrane. The chain crosses the membrane as a helical span at residues 150 to 170 (MFGCLGWGLCASTGGILFGID). Position 171 (P171) is a topological domain, periplasmic. A helical membrane pass occupies residues 172-192 (SYVFWMGSAAALLLMLLLVVA). Residues 193–227 (KPKPNQTAQVMNALGANQPQITAKKVFNLFRQRRM) lie on the Cytoplasmic side of the membrane. The helical transmembrane segment at 228–248 (WMFILYVIGVACVYDVFDQQF) threads the bilayer. The Periplasmic portion of the chain corresponds to 249 to 267 (ATFFKTFFATPQEGTRAFG). Residues 268–288 (FATTAGEICNAIIMFCSPWII) traverse the membrane as a helical segment. Topologically, residues 289-297 (NRIGAKNTL) are cytoplasmic. The chain crosses the membrane as a helical span at residues 298–318 (LIAGLIMATRIIGSSFATTAV). The Periplasmic portion of the chain corresponds to 319–325 (EVIALKM). Residues 326–346 (LHALEVPFLLVGAFKYITGVF) form a helical membrane-spanning segment. At 347-353 (DTRLSAT) the chain is on the cytoplasmic side. Residues 354–374 (IYLIGFQFAKQSAAIFLSAFA) form a helical membrane-spanning segment. Residues 375–385 (GNMYDRIGFQE) lie on the Periplasmic side of the membrane. Residues 386 to 406 (TYLMLGCFVLAITVVSAFTLS) form a helical membrane-spanning segment. Residues 407–425 (SRQEIAAAAGAAALTSQSR) are Cytoplasmic-facing.

It belongs to the major facilitator superfamily. Oligosaccharide:H(+) symporter (OHS) (TC 2.A.1.5) family.

The protein localises to the cell inner membrane. Responsible for transport of melibiose into the cell, with the concomitant import of a proton (symport system). Can also transport lactose, and has weak activity with maltose. Cannot transport the analog methyl-1-thio-beta,D-galactopyranoside (TMG). This chain is Melibiose permease, found in Enterobacter cloacae subsp. cloacae (strain ATCC 13047 / DSM 30054 / NBRC 13535 / NCTC 10005 / WDCM 00083 / NCDC 279-56).